An 833-amino-acid chain; its full sequence is Leucine--tRNA ligase (833 aa).

Positions 41–52 match the 'HIGH' region motif; that stretch reads PYPSGAGLHVGH. The 'KMSKS' region motif lies at 610–614; that stretch reads KMSKS. Lysine 613 contributes to the ATP binding site.

The protein belongs to the class-I aminoacyl-tRNA synthetase family.

The protein resides in the cytoplasm. It catalyses the reaction tRNA(Leu) + L-leucine + ATP = L-leucyl-tRNA(Leu) + AMP + diphosphate. This is Leucine--tRNA ligase from Streptococcus pneumoniae (strain Hungary19A-6).